Reading from the N-terminus, the 417-residue chain is Gamma-glutamyl phosphate reductase (417 aa).

This sequence belongs to the gamma-glutamyl phosphate reductase family.

Its subcellular location is the cytoplasm. The catalysed reaction is L-glutamate 5-semialdehyde + phosphate + NADP(+) = L-glutamyl 5-phosphate + NADPH + H(+). It functions in the pathway amino-acid biosynthesis; L-proline biosynthesis; L-glutamate 5-semialdehyde from L-glutamate: step 2/2. Functionally, catalyzes the NADPH-dependent reduction of L-glutamate 5-phosphate into L-glutamate 5-semialdehyde and phosphate. The product spontaneously undergoes cyclization to form 1-pyrroline-5-carboxylate. This chain is Gamma-glutamyl phosphate reductase, found in Proteus mirabilis (strain HI4320).